Here is a 180-residue protein sequence, read N- to C-terminus: ATP synthase subunit delta (180 aa).

Belongs to the ATPase delta chain family. In terms of assembly, F-type ATPases have 2 components, F(1) - the catalytic core - and F(0) - the membrane proton channel. F(1) has five subunits: alpha(3), beta(3), gamma(1), delta(1), epsilon(1). CF(0) has four main subunits: a(1), b(1), b'(1) and c(10-14). The alpha and beta chains form an alternating ring which encloses part of the gamma chain. F(1) is attached to F(0) by a central stalk formed by the gamma and epsilon chains, while a peripheral stalk is formed by the delta, b and b' chains.

It is found in the cellular thylakoid membrane. Its function is as follows. F(1)F(0) ATP synthase produces ATP from ADP in the presence of a proton or sodium gradient. F-type ATPases consist of two structural domains, F(1) containing the extramembraneous catalytic core and F(0) containing the membrane proton channel, linked together by a central stalk and a peripheral stalk. During catalysis, ATP synthesis in the catalytic domain of F(1) is coupled via a rotary mechanism of the central stalk subunits to proton translocation. Functionally, this protein is part of the stalk that links CF(0) to CF(1). It either transmits conformational changes from CF(0) to CF(1) or is implicated in proton conduction. The polypeptide is ATP synthase subunit delta (Prochlorococcus marinus subsp. pastoris (strain CCMP1986 / NIES-2087 / MED4)).